The sequence spans 291 residues: Tryptophan synthase alpha chain (291 aa).

Catalysis depends on proton acceptor residues glutamate 69 and aspartate 80.

It belongs to the TrpA family. Tetramer of two alpha and two beta chains.

The catalysed reaction is (1S,2R)-1-C-(indol-3-yl)glycerol 3-phosphate + L-serine = D-glyceraldehyde 3-phosphate + L-tryptophan + H2O. It participates in amino-acid biosynthesis; L-tryptophan biosynthesis; L-tryptophan from chorismate: step 5/5. In terms of biological role, the alpha subunit is responsible for the aldol cleavage of indoleglycerol phosphate to indole and glyceraldehyde 3-phosphate. The sequence is that of Tryptophan synthase alpha chain from Bifidobacterium longum (strain NCC 2705).